The chain runs to 143 residues: Transcriptional regulator MraZ (143 aa).

SpoVT-AbrB domains lie at 5–47 (EYQH…PKEE) and 76–119 (AGEC…SRER).

Belongs to the MraZ family. In terms of assembly, forms oligomers.

The protein localises to the cytoplasm. The protein resides in the nucleoid. The protein is Transcriptional regulator MraZ of Heliobacterium modesticaldum (strain ATCC 51547 / Ice1).